A 427-amino-acid chain; its full sequence is Protein TIFY 6a (427 aa).

Basic and acidic residues predominate over residues 1–25 (MERDFLGAIGRKEEAAGKPEEHSDY). Residues 1–33 (MERDFLGAIGRKEEAAGKPEEHSDYRGGGGGAS) are disordered. Residues 196–231 (QNPKVTQMTIFYDGLVNVFDNIPVEKAQELMLLASR) enclose the Tify domain. Composition is skewed to polar residues over residues 293–303 (LPKSSSSSNDS) and 317–327 (PLSQASPSQPI). Positions 293–327 (LPKSSSSSNDSAGPKSGGLPLAVTPLSQASPSQPI) are disordered. Positions 343-367 (PQARKASLARFLEKRKERVSSVAPY) match the Jas motif. The Nuclear localization signal motif lies at 345 to 352 (ARKASLAR). The interval 360 to 427 (RVSSVAPYPS…QEPPSTKLQI (68 aa)) is disordered. Polar residues-rich tracts occupy residues 369-402 (SSKS…NNCE) and 411-427 (RNIS…KLQI).

The protein belongs to the TIFY/JAZ family. Ubiquitinated.

The protein resides in the nucleus. Repressor of jasmonate responses. The polypeptide is Protein TIFY 6a (Oryza sativa subsp. indica (Rice)).